The sequence spans 133 residues: Glycine cleavage system H protein (133 aa).

One can recognise a Lipoyl-binding domain in the interval 24-106 (IATIGISAYA…YGDGWLLKVR (83 aa)). At Lys-65 the chain carries N6-lipoyllysine.

This sequence belongs to the GcvH family. In terms of assembly, the glycine cleavage system is composed of four proteins: P, T, L and H. (R)-lipoate serves as cofactor.

Functionally, the glycine cleavage system catalyzes the degradation of glycine. The H protein shuttles the methylamine group of glycine from the P protein to the T protein. The chain is Glycine cleavage system H protein from Crocosphaera subtropica (strain ATCC 51142 / BH68) (Cyanothece sp. (strain ATCC 51142)).